Here is a 169-residue protein sequence, read N- to C-terminus: Disulfide bond formation protein B 1 (169 aa).

Residues 1–14 (MSDDRLGLGRERRF) lie on the Cytoplasmic side of the membrane. The helical transmembrane segment at 15 to 31 (LVLLGIICLALIGGALY) threads the bilayer. Residues 32-49 (MQVVLGEAPCPLCILQRY) lie on the Periplasmic side of the membrane. A disulfide bond links Cys-41 and Cys-44. The chain crosses the membrane as a helical span at residues 50–64 (ALLLIALFAFIGAAM). Topologically, residues 65-71 (SSRRGVT) are cytoplasmic. A helical transmembrane segment spans residues 72–89 (VMETLVVICALAGAGVAG). At 90–144 (HHVYTQFYPSVSCGIDVLQPIVDSLPLAKIFPLGFQVDGFCSTPYPPILGLSLAQ) the chain is on the periplasmic side. An intrachain disulfide couples Cys-102 to Cys-130. Residues 145–163 (WALVAFVLTVILVPLGVVR) form a helical membrane-spanning segment. Residues 164 to 169 (NRKKTY) are Cytoplasmic-facing.

The protein belongs to the DsbB family.

It localises to the cell inner membrane. Functionally, required for disulfide bond formation in some periplasmic proteins. Acts by oxidizing the DsbA protein. This Pseudomonas fluorescens (strain ATCC BAA-477 / NRRL B-23932 / Pf-5) protein is Disulfide bond formation protein B 1.